Reading from the N-terminus, the 456-residue chain is tRNA modification GTPase MnmE (456 aa).

Residues Arg24, Glu81, and Lys120 each contribute to the (6S)-5-formyl-5,6,7,8-tetrahydrofolate site. One can recognise a TrmE-type G domain in the interval 216–379 (GMTVVIAGRP…LRDHLKACMG (164 aa)). Asn226 serves as a coordination point for K(+). GTP is bound by residues 226–231 (NAGKSS), 245–251 (TDIAGTT), 270–273 (DTAG), and 335–338 (NKAD). Ser230 lines the Mg(2+) pocket. K(+) is bound by residues Thr245, Ile247, and Thr250. Thr251 serves as a coordination point for Mg(2+). Lys456 is a binding site for (6S)-5-formyl-5,6,7,8-tetrahydrofolate.

This sequence belongs to the TRAFAC class TrmE-Era-EngA-EngB-Septin-like GTPase superfamily. TrmE GTPase family. As to quaternary structure, homodimer. Heterotetramer of two MnmE and two MnmG subunits. Requires K(+) as cofactor.

The protein resides in the cytoplasm. In terms of biological role, exhibits a very high intrinsic GTPase hydrolysis rate. Involved in the addition of a carboxymethylaminomethyl (cmnm) group at the wobble position (U34) of certain tRNAs, forming tRNA-cmnm(5)s(2)U34. This is tRNA modification GTPase MnmE from Pseudomonas putida (strain GB-1).